A 144-amino-acid polypeptide reads, in one-letter code: MSLYECVFIARQDISTPQVETLTEELSNIITQGGGSVSKKEYWGLRNIAYRVKKNRKGHYVLLNIDAPSAAVKEMERQMSINEDVLRTLTIRVEELEEGPSAMMQSKSRDDRPRRGEGDDRPRRDDREDRPRRDREPRRMEGGE.

A disordered region spans residues 95–144 (ELEEGPSAMMQSKSRDDRPRRGEGDDRPRRDDREDRPRRDREPRRMEGGE). Residues 107 to 144 (KSRDDRPRRGEGDDRPRRDDREDRPRRDREPRRMEGGE) are compositionally biased toward basic and acidic residues.

The protein belongs to the bacterial ribosomal protein bS6 family.

Its function is as follows. Binds together with bS18 to 16S ribosomal RNA. In Paramagnetospirillum magneticum (strain ATCC 700264 / AMB-1) (Magnetospirillum magneticum), this protein is Small ribosomal subunit protein bS6.